We begin with the raw amino-acid sequence, 263 residues long: METAVNAKSPRNEKVLNCLYQNPDAVFKLICFPWAGGGSIHFAKWGQKINDSLEVHAVRLAGRETRLGEPFANDIYQIADEIVTALLPIIQDKAFAFFGHSFGSYIALITALLLKEKYKMEPLHIFVSGASAPHSTSRPQVPDLNELTEEQVRHHLLDFGGTPKHLIEDQDVLRMFIPLLKADAGVVKKFIFDKPSKALLSLDITGFLGSEDTIKDIEGWQDLTSGKFDVHMLPGDHFYLMKPDNENFIKNYIAKCLELSSLT.

Methionine 1 bears the N-acetylmethionine mark. Catalysis depends on residues serine 101 and histidine 237. An important for interaction with FASN region spans residues 262–263 (LT).

The protein belongs to the thioesterase family. As to quaternary structure, interacts (via C-terminus) with FASN.

The protein resides in the cytoplasm. It is found in the cytosol. The catalysed reaction is (9Z)-octadecenoyl-[ACP] + H2O = (9Z)-octadecenoate + holo-[ACP] + H(+). The enzyme catalyses decanoyl-CoA + H2O = decanoate + CoA + H(+). It carries out the reaction dodecanoyl-CoA + H2O = dodecanoate + CoA + H(+). It catalyses the reaction tetradecanoyl-CoA + H2O = tetradecanoate + CoA + H(+). The catalysed reaction is hexadecanoyl-CoA + H2O = hexadecanoate + CoA + H(+). In terms of biological role, contributes to the release of free fatty acids from fatty acid synthase (FASN). Has broad substrate specificity, giving rise to a range of free fatty acids with chain lengths between 10 and 16 carbon atoms (C10 - C16). In Rattus norvegicus (Rat), this protein is S-acyl fatty acid synthase thioesterase, medium chain.